Here is a 443-residue protein sequence, read N- to C-terminus: Xaa-Pro dipeptidase (443 aa).

Residues Asp-246, Asp-257, His-339, Glu-384, and Glu-423 each contribute to the Mn(2+) site.

This sequence belongs to the peptidase M24B family. Bacterial-type prolidase subfamily. It depends on Mn(2+) as a cofactor.

The enzyme catalyses Xaa-L-Pro dipeptide + H2O = an L-alpha-amino acid + L-proline. Functionally, splits dipeptides with a prolyl residue in the C-terminal position. In Edwardsiella ictaluri (strain 93-146), this protein is Xaa-Pro dipeptidase.